Here is a 179-residue protein sequence, read N- to C-terminus: UPF0303 protein YBR137W (179 aa).

This sequence belongs to the UPF0303 family.

It is found in the cytoplasm. This Saccharomyces cerevisiae (strain ATCC 204508 / S288c) (Baker's yeast) protein is UPF0303 protein YBR137W.